A 130-amino-acid chain; its full sequence is Fluoride-specific ion channel FluC (130 aa).

Helical transmembrane passes span 2–22 (GLLL…RFAL), 36–56 (GILL…AFLI), 71–91 (FLLV…SLDI), and 100–120 (IFIA…AVIL). Gly-79 and Thr-82 together coordinate Na(+).

Belongs to the fluoride channel Fluc/FEX (TC 1.A.43) family.

It localises to the cell inner membrane. It carries out the reaction fluoride(in) = fluoride(out). Its activity is regulated as follows. Na(+) is not transported, but it plays an essential structural role and its presence is essential for fluoride channel function. Its function is as follows. Fluoride-specific ion channel. Important for reducing fluoride concentration in the cell, thus reducing its toxicity. This chain is Fluoride-specific ion channel FluC, found in Francisella tularensis subsp. tularensis (strain FSC 198).